A 502-amino-acid chain; its full sequence is Chlorophyllide reductase 52.5 kDa chain (502 aa).

Transmembrane regions (helical) follow at residues 70–87, 131–147, and 221–238; these read VGTI…LSFV, AIVV…GVPL, and VMIG…GPVV.

The protein belongs to the BchN/ChlN family. As to quaternary structure, chlorophyllide reductase is composed of three subunits; BchX, BchY and BchZ. Forms a heterodimer of one BchY and one BchZ subunit.

The protein localises to the cell membrane. It carries out the reaction 3-deacetyl-3-vinylbacteriochlorophyllide a + 2 oxidized [2Fe-2S]-[ferredoxin] + ADP + phosphate = chlorophyllide a + 2 reduced [2Fe-2S]-[ferredoxin] + ATP + H2O + H(+). The catalysed reaction is bacteriochlorophyllide a + 2 oxidized [2Fe-2S]-[ferredoxin] + ADP + phosphate = 3-acetyl-3-devinylchlorophyllide a + 2 reduced [2Fe-2S]-[ferredoxin] + ATP + H2O + H(+). The enzyme catalyses 3-deacetyl-3-(1-hydroxyethyl)bacteriochlorophyllide a + 2 oxidized [2Fe-2S]-[ferredoxin] + ADP + phosphate = 3-devinyl-3-(1-hydroxyethyl)chlorophyllide a + 2 reduced [2Fe-2S]-[ferredoxin] + ATP + H2O + H(+). It functions in the pathway porphyrin-containing compound metabolism; bacteriochlorophyll biosynthesis (light-independent). Its function is as follows. Converts chlorophylls (Chl) into bacteriochlorophylls (BChl) by reducing ring B of the tetrapyrrole. This Cereibacter sphaeroides (strain ATCC 17023 / DSM 158 / JCM 6121 / CCUG 31486 / LMG 2827 / NBRC 12203 / NCIMB 8253 / ATH 2.4.1.) (Rhodobacter sphaeroides) protein is Chlorophyllide reductase 52.5 kDa chain (bchY).